The chain runs to 279 residues: Protein CMSS1 (279 aa).

Residues 1-10 (MADDLGDEWW) show a composition bias toward acidic residues. The tract at residues 1 to 89 (MADDLGDEWW…DVLAKSEPKP (89 aa)) is disordered. The segment covering 12–22 (NQPTGAGSSPE) has biased composition (polar residues). Phosphoserine is present on residues S19 and S24. Position 167 is an omega-N-methylarginine (R167). T212 is subject to Phosphothreonine.

Belongs to the CMS1 family.

This chain is Protein CMSS1 (CMSS1), found in Homo sapiens (Human).